Reading from the N-terminus, the 549-residue chain is Nectin-3 (549 aa).

The signal sequence occupies residues 1–57 (MARTLRPSPLCPGGGKAQLSSASLLGAGLLLQPPTPPPLLLLLFPLLLFSRLCGALA). Residues 58-404 (GPIIVEPHVT…ATIKDDTIAT (347 aa)) lie on the Extracellular side of the membrane. Residues 59–165 (PIIVEPHVTA…GNAQSSTTVT (107 aa)) form the Ig-like V-type domain. N-linked (GlcNAc...) asparagine glycosylation is found at asparagine 73, asparagine 83, asparagine 125, asparagine 186, asparagine 222, and asparagine 331. Cysteine 78 and cysteine 148 are joined by a disulfide. Ig-like C2-type domains follow at residues 170–258 (PTVS…KDIR) and 269–354 (PEVS…KVIY). Disulfide bonds link cysteine 193/cysteine 246 and cysteine 291/cysteine 338. A helical membrane pass occupies residues 405-425 (IIASVVGGALFIVLVSVLAGI). At 426-549 (FCYRRRRTFR…SVISRREWYV (124 aa)) the chain is on the cytoplasmic side.

Belongs to the nectin family. Cis- and trans-homodimer. Can form trans-heterodimers with NECTIN1, NECTIN2, PVR, IGSF4B/Necl-1 and with IGSF4. Interaction between NECTIN1 and NECTIN3 on the pre- and postsynaptic sites, respectively, initiates the formation of puncta adherentia junctions between axons and dendrites. Interacts (via Cytoplasmic domain) with AFDN, providing a connection with the actin cytoskeleton. Binds with low affinity to TIGIT. As to quaternary structure, (Microbial infection) Interacts with C.difficile toxin TcdB, suggesting that it may contribute to TcdB toxin entry into cells. It was however shown that NECTIN3/PVRL3 does not act as a major receptor for TcdB. Predominantly expressed in testis and placenta as well as in many cell lines, including epithelial cell lines.

The protein localises to the cell membrane. It localises to the postsynaptic cell membrane. The protein resides in the cell junction. It is found in the adherens junction. Functionally, cell adhesion molecule that promotes cell-cell adhesion through heterophilic trans-interactions with nectins-like or other nectins, such as trans-interaction with NECTIN2 at Sertoli-spermatid junctions. Trans-interaction with PVR induces activation of CDC42 and RAC small G proteins through common signaling molecules such as SRC and RAP1. Induces endocytosis-mediated down-regulation of PVR from the cell surface, resulting in reduction of cell movement and proliferation. Involved in axon guidance by promoting contacts between the commissural axons and the floor plate cells. Also involved in the formation of cell-cell junctions, including adherens junctions and synapses. Promotes formation of checkerboard-like cellular pattern of hair cells and supporting cells in the auditory epithelium via heterophilic interaction with NECTIN1: NECTIN1 is present in the membrane of hair cells and associates with NECTIN3 on supporting cells, thereby mediating heterotypic adhesion between these two cell types. Plays a role in the morphology of the ciliary body. In Homo sapiens (Human), this protein is Nectin-3.